We begin with the raw amino-acid sequence, 230 residues long: Ribosomal RNA small subunit methyltransferase G (230 aa).

S-adenosyl-L-methionine contacts are provided by residues Gly93, Leu98, 144–145 (IE), and Arg158.

It belongs to the methyltransferase superfamily. RNA methyltransferase RsmG family.

It is found in the cytoplasm. The enzyme catalyses guanosine(527) in 16S rRNA + S-adenosyl-L-methionine = N(7)-methylguanosine(527) in 16S rRNA + S-adenosyl-L-homocysteine. In terms of biological role, specifically methylates the N7 position of guanine in position 527 of 16S rRNA. This Bordetella parapertussis (strain 12822 / ATCC BAA-587 / NCTC 13253) protein is Ribosomal RNA small subunit methyltransferase G.